Consider the following 187-residue polypeptide: UPF0340 protein SPG_0604 (187 aa).

It belongs to the UPF0340 family.

This chain is UPF0340 protein SPG_0604, found in Streptococcus pneumoniae serotype 19F (strain G54).